Reading from the N-terminus, the 402-residue chain is S-adenosylmethionine synthase (402 aa).

His16 lines the ATP pocket. Mg(2+) is bound at residue Asp18. Glu44 provides a ligand contact to K(+). The L-methionine site is built by Glu57 and Gln103. A flexible loop region spans residues 103–113; the sequence is QSPDIAQGVDT. Residues 178-180, 249-250, Asp258, 264-265, Ala281, and Lys285 contribute to the ATP site; these read DGK, KF, and RK. Asp258 is a binding site for L-methionine. An L-methionine-binding site is contributed by Lys289.

It belongs to the AdoMet synthase family. Homotetramer; dimer of dimers. It depends on Mg(2+) as a cofactor. K(+) is required as a cofactor.

The protein resides in the cytoplasm. The catalysed reaction is L-methionine + ATP + H2O = S-adenosyl-L-methionine + phosphate + diphosphate. Its pathway is amino-acid biosynthesis; S-adenosyl-L-methionine biosynthesis; S-adenosyl-L-methionine from L-methionine: step 1/1. Catalyzes the formation of S-adenosylmethionine (AdoMet) from methionine and ATP. The overall synthetic reaction is composed of two sequential steps, AdoMet formation and the subsequent tripolyphosphate hydrolysis which occurs prior to release of AdoMet from the enzyme. This is S-adenosylmethionine synthase from Mycobacterium sp. (strain JLS).